The sequence spans 632 residues: Phosphomethylpyrimidine synthase (632 aa).

Substrate-binding positions include asparagine 237, methionine 266, tyrosine 295, histidine 331, 351–353 (SRG), 392–395 (DGLR), and glutamate 431. Zn(2+) is bound at residue histidine 435. Tyrosine 458 provides a ligand contact to substrate. A Zn(2+)-binding site is contributed by histidine 499. Positions 579, 582, and 587 each coordinate [4Fe-4S] cluster.

This sequence belongs to the ThiC family. Homodimer. It depends on [4Fe-4S] cluster as a cofactor.

It catalyses the reaction 5-amino-1-(5-phospho-beta-D-ribosyl)imidazole + S-adenosyl-L-methionine = 4-amino-2-methyl-5-(phosphooxymethyl)pyrimidine + CO + 5'-deoxyadenosine + formate + L-methionine + 3 H(+). Its pathway is cofactor biosynthesis; thiamine diphosphate biosynthesis. Functionally, catalyzes the synthesis of the hydroxymethylpyrimidine phosphate (HMP-P) moiety of thiamine from aminoimidazole ribotide (AIR) in a radical S-adenosyl-L-methionine (SAM)-dependent reaction. This Nitrosomonas eutropha (strain DSM 101675 / C91 / Nm57) protein is Phosphomethylpyrimidine synthase.